The chain runs to 482 residues: Arginine/ornithine antiporter (482 aa).

Topologically, residues 1–10 are cytoplasmic; sequence MSQESSQKLR. The helical transmembrane segment at 11-31 threads the bilayer; that stretch reads LGALTALVVGSMIGGGIFSLP. Over 32-40 the chain is Periplasmic; the sequence is QNMAASADV. Residues 41-61 traverse the membrane as a helical segment; that stretch reads GAVLIGWAITAVGMLTLAFVF. Residues 62 to 100 lie on the Cytoplasmic side of the membrane; the sequence is QTLANRKPELDGGVYAYAKAGFGDYMGFSSAWGYWISAW. The chain crosses the membrane as a helical span at residues 101–121; that stretch reads LGNVGYFVLLFSTLGYFFPIF. Residues 122-124 are Periplasmic-facing; that stretch reads GKG. The helical transmembrane segment at 125 to 145 threads the bilayer; the sequence is DTVAAIVCASVLLWALHFLVL. At 146–156 the chain is on the cytoplasmic side; that stretch reads RGIKEAAFINT. The chain crosses the membrane as a helical span at residues 157-177; it reads VTTVAKVVPLFLFILICLFAF. The Periplasmic portion of the chain corresponds to 178–202; that stretch reads KLDIFTADIWGKSNPDLGSVMNQVR. Residues 203–223 form a helical membrane-spanning segment; sequence NMMLVTVWVFIGIEGASIFSS. Topologically, residues 224-235 are cytoplasmic; it reads RAEKRSDVGKAT. Residues 236–256 form a helical membrane-spanning segment; it reads VIGFITVLLLLVLVNVLSMGV. The Periplasmic portion of the chain corresponds to 257 to 283; it reads MTQPELAKLQNPSMALVLEHVVGHWGA. The chain crosses the membrane as a helical span at residues 284–304; it reads VLISVGLLISLLGALLSWVLL. Residues 305–333 are Cytoplasmic-facing; it reads CAEIMFAAAKDHTMPEFLRRENANQVPAN. A helical transmembrane segment spans residues 334–354; the sequence is ALWLTNICVQVFLVVVFFTSG. The Periplasmic segment spans residues 355 to 365; the sequence is DPDGMDPYTKM. The helical transmembrane segment at 366-386 threads the bilayer; that stretch reads LLLATSMILIPYFWSAAYGLL. Topologically, residues 387–403 are cytoplasmic; that stretch reads LTLKGETYENDARERSK. The helical transmembrane segment at 404-424 threads the bilayer; sequence DLVIAGIAVAYAVWLLYAGGL. Residue Lys425 is a topological domain, periplasmic. A helical transmembrane segment spans residues 426–446; the sequence is YLLLSALLYAPGAILFAKAKH. The Cytoplasmic portion of the chain corresponds to 447 to 458; sequence EVGQPIFTGIEK. A helical membrane pass occupies residues 459–479; it reads LIFAAVVIGALVAAYGLYDGF. The Periplasmic segment spans residues 480 to 482; sequence LTL.

It belongs to the amino acid-polyamine-organocation (APC) superfamily. Basic amino acid/polyamine antiporter (APA) (TC 2.A.3.2) family.

It localises to the cell inner membrane. The enzyme catalyses L-ornithine(in) + L-arginine(out) = L-ornithine(out) + L-arginine(in). Catalyzes electroneutral exchange between arginine and ornithine to allow high-efficiency energy conversion in the arginine deiminase pathway. Also mediates the proton motive force-driven uptake of arginine and ornithine, but the exchange is several orders of magnitude faster than the proton motive force-driven transport. In Pseudomonas aeruginosa (strain ATCC 15692 / DSM 22644 / CIP 104116 / JCM 14847 / LMG 12228 / 1C / PRS 101 / PAO1), this protein is Arginine/ornithine antiporter.